The sequence spans 507 residues: ATP synthase subunit alpha (507 aa).

169 to 176 contacts ATP; that stretch reads GDRQTGKT.

Belongs to the ATPase alpha/beta chains family. In terms of assembly, F-type ATPases have 2 components, CF(1) - the catalytic core - and CF(0) - the membrane proton channel. CF(1) has five subunits: alpha(3), beta(3), gamma(1), delta(1), epsilon(1). CF(0) has three main subunits: a(1), b(2) and c(9-12). The alpha and beta chains form an alternating ring which encloses part of the gamma chain. CF(1) is attached to CF(0) by a central stalk formed by the gamma and epsilon chains, while a peripheral stalk is formed by the delta and b chains.

The protein resides in the cell membrane. It carries out the reaction ATP + H2O + 4 H(+)(in) = ADP + phosphate + 5 H(+)(out). Produces ATP from ADP in the presence of a proton gradient across the membrane. The alpha chain is a regulatory subunit. The sequence is that of ATP synthase subunit alpha from Desulforudis audaxviator (strain MP104C).